The following is a 170-amino-acid chain: Protein AIG2 A (170 aa).

Tyrosine 15 to glutamate 20 provides a ligand contact to substrate. Glutamate 83 functions as the Proton acceptor in the catalytic mechanism. Residues lysine 147 to glutamine 162 show a composition bias toward basic and acidic residues. The interval lysine 147–alanine 170 is disordered.

The protein belongs to the gamma-glutamylcyclotransferase family. Ubiquitous.

In terms of biological role, putative gamma-glutamylcyclotransferase. The sequence is that of Protein AIG2 A from Arabidopsis thaliana (Mouse-ear cress).